A 433-amino-acid chain; its full sequence is Serine--tRNA ligase (433 aa).

Threonine 235–glutamate 237 serves as a coordination point for L-serine. Arginine 266 to glutamate 268 is an ATP binding site. Glutamate 289 provides a ligand contact to L-serine. Glutamate 353–serine 356 serves as a coordination point for ATP. Residue serine 388 coordinates L-serine.

The protein belongs to the class-II aminoacyl-tRNA synthetase family. Type-1 seryl-tRNA synthetase subfamily. In terms of assembly, homodimer. The tRNA molecule binds across the dimer.

The protein resides in the cytoplasm. It carries out the reaction tRNA(Ser) + L-serine + ATP = L-seryl-tRNA(Ser) + AMP + diphosphate + H(+). It catalyses the reaction tRNA(Sec) + L-serine + ATP = L-seryl-tRNA(Sec) + AMP + diphosphate + H(+). It functions in the pathway aminoacyl-tRNA biosynthesis; selenocysteinyl-tRNA(Sec) biosynthesis; L-seryl-tRNA(Sec) from L-serine and tRNA(Sec): step 1/1. Its function is as follows. Catalyzes the attachment of serine to tRNA(Ser). Is also able to aminoacylate tRNA(Sec) with serine, to form the misacylated tRNA L-seryl-tRNA(Sec), which will be further converted into selenocysteinyl-tRNA(Sec). This Burkholderia pseudomallei (strain 668) protein is Serine--tRNA ligase.